The chain runs to 364 residues: MAQQTPLYEQHTLCGARMVDFHGWMMPLHYGSQLDEHHAVRTDAGMFDVSHMTIVDLHGSRTREFLRYLLANDVAKLTKTGKALYSGMLNASGGVIDDLIIYYFTEDFFRLVVNSATREKDLSWITQHAEPYAIDITVRDDLSLIAVQGPNAQEKAATLFTDEQRHAVEGMKPFFGVQAGDLFIATTGYTGEAGYEIAMPNEKAADFWRALVEAGVKPCGLGARDTLRLEAGMNLYGQEMDEGISPLAANMGWTIAWEPADRDFIGREALEMQREKGHEQLVGLVMTEKGVLRNELPVRFTDAQGNQQEGIITSGTFSPTLGYSIALARVPAGIGETAIVQIRNREMPVKVTKPVFVRNGKAVA.

The protein belongs to the GcvT family. As to quaternary structure, the glycine cleavage system is composed of four proteins: P, T, L and H.

The catalysed reaction is N(6)-[(R)-S(8)-aminomethyldihydrolipoyl]-L-lysyl-[protein] + (6S)-5,6,7,8-tetrahydrofolate = N(6)-[(R)-dihydrolipoyl]-L-lysyl-[protein] + (6R)-5,10-methylene-5,6,7,8-tetrahydrofolate + NH4(+). Its function is as follows. The glycine cleavage system catalyzes the degradation of glycine. This is Aminomethyltransferase from Salmonella dublin (strain CT_02021853).